The chain runs to 359 residues: UPF0284 protein MAE_56900 (359 aa).

This sequence belongs to the UPF0284 family.

This is UPF0284 protein MAE_56900 from Microcystis aeruginosa (strain NIES-843 / IAM M-2473).